The chain runs to 36 residues: U-metritoxin-Msn1a (36 aa).

The 33-residue stretch at C4–C36 folds into the ShKT domain. 3 disulfides stabilise this stretch: C4–C36, C11–C28, and C19–C32.

The protein belongs to the sea anemone type 1 potassium channel toxin family. Type 1b subfamily.

The protein resides in the secreted. It localises to the nematocyst. Has hemolytic activity. Inhibits voltage-gated potassium channels (Kv1/KCNA). This Metridium senile (Brown sea anemone) protein is U-metritoxin-Msn1a.